The sequence spans 530 residues: Seeligeriolysin (530 aa).

The signal sequence occupies residues 1-25; sequence MKIFGLVIMSLLFVSLPITQQPEAR. Residues 36–55 form a disordered region; that stretch reads TISPAETPESPPATPKTPVE. 4 beta stranded membrane passes run 215 to 228, 235 to 244, 313 to 322, and 330 to 342; these read ESQL…AFKA, VNFEAISDGK, SNKVKTAFEA, and KGDV…IKNS. Residues 484–494 carry the Conserved undecapeptide motif; that stretch reads ECTGLFWEWWR. A Cholesterol binding motif is present at residues 516 to 517; the sequence is TL.

Belongs to the cholesterol-dependent cytolysin family. Homooligomeric pore complex of 35 to 50 subunits; when inserted in the host membrane.

It localises to the secreted. The protein resides in the host cell membrane. A cholesterol-dependent toxin that causes cytolysis by forming pores in cholesterol containing host membranes. L.seeligeri is non-pathogenic, perhaps in part because this protein is about 25% as toxic as listeriolysin O. Mutating a single residue in the undecapeptide increases toxicity 2-fold. After binding to target membranes, the protein undergoes a major conformation change, leading to its insertion in the host membrane and formation of an oligomeric pore complex. Cholesterol is required for binding to host membranes, membrane insertion and pore formation; cholesterol binding is mediated by a Thr-Leu pair in the C-terminus. Can be reversibly inactivated by oxidation. The protein is Seeligeriolysin of Listeria seeligeri.